The sequence spans 776 residues: Venom dipeptidyl peptidase 4 (776 aa).

The N-terminal stretch at 1–25 (MVPLRSFVLLNSLFLVLLAARTVVT) is a signal peptide. N-linked (GlcNAc...) asparagine glycans are attached at residues Asn44, Asn66, and Asn329. Intrachain disulfides connect Cys449-Cys452 and Cys462-Cys480. 2 N-linked (GlcNAc...) asparagine glycosylation sites follow: Asn504 and Asn577. Catalysis depends on Ser638, which acts as the Charge relay system. A disulfide bridge connects residues Cys658 and Cys769. 2 N-linked (GlcNAc...) asparagine glycosylation sites follow: Asn688 and Asn693. Residues Asp717 and His749 each act as charge relay system in the active site.

The protein belongs to the peptidase S9B family. DPPIV subfamily. Expressed by the venom gland.

It localises to the secreted. The catalysed reaction is Release of an N-terminal dipeptide, Xaa-Yaa-|-Zaa-, from a polypeptide, preferentially when Yaa is Pro, provided Zaa is neither Pro nor hydroxyproline.. Its activity is regulated as follows. Inhibited by diprotin A. Venom dipeptidyl-peptidase which removes N-terminal dipeptides sequentially from polypeptides having unsubstituted N-termini provided that the penultimate residue is proline. May process venom proteins into their active forms and/or modulate the chemotactic activity of immune cells after the insect sting. The protein is Venom dipeptidyl peptidase 4 of Vespula vulgaris (Yellow jacket).